Reading from the N-terminus, the 142-residue chain is Hemoglobin subunit alpha (142 aa).

S1 carries the post-translational modification N-acetylserine. In terms of domain architecture, Globin spans 1–142 (SLSDKDKAAV…VALALAERYR (142 aa)). An O2-binding site is contributed by H59. H88 is a binding site for heme b.

It belongs to the globin family. As to quaternary structure, hb1 is a heterotetramer of two alpha chains and two beta-1 chains, while Hb2 is a heterotetramer of two alpha chains and two beta-2 chains. In terms of tissue distribution, red blood cells.

In terms of biological role, involved in oxygen transport from gills to the various peripheral tissues. This chain is Hemoglobin subunit alpha (hba), found in Cygnodraco mawsoni (Antarctic dragonfish).